Consider the following 1371-residue polypeptide: DNA-directed RNA polymerase subunit beta (1371 aa).

This sequence belongs to the RNA polymerase beta chain family. The RNAP catalytic core consists of 2 alpha, 1 beta, 1 beta' and 1 omega subunit. When a sigma factor is associated with the core the holoenzyme is formed, which can initiate transcription.

It catalyses the reaction RNA(n) + a ribonucleoside 5'-triphosphate = RNA(n+1) + diphosphate. Functionally, DNA-dependent RNA polymerase catalyzes the transcription of DNA into RNA using the four ribonucleoside triphosphates as substrates. This is DNA-directed RNA polymerase subunit beta from Citrifermentans bemidjiense (strain ATCC BAA-1014 / DSM 16622 / JCM 12645 / Bem) (Geobacter bemidjiensis).